A 372-amino-acid chain; its full sequence is Ca(2+)/H(+) antiporter (372 aa).

The next 11 helical transmembrane spans lie at 7–27, 29–49, 62–82, 94–114, 134–154, 162–182, 222–242, 251–271, 294–314, 320–340, and 352–372; these read IFLV…LGWG, TTVF…MGTA, GGLL…YIAL, LTGS…FLGG, MNLG…STGV, LSVA…VFSM, LWTG…ELLV, SLGL…GNAA, GSSL…GWAI, LNFN…VNSI, and ILLL…PTLV.

The protein belongs to the Ca(2+):cation antiporter (CaCA) (TC 2.A.19) family. Cation/proton exchanger (CAX) subfamily.

The protein resides in the cell inner membrane. Ca(+)/H(+) antiporter that extrudes calcium in exchange for external protons. Plays an important role in salt tolerance. Does not transport sodium or lithium. The protein is Ca(2+)/H(+) antiporter of Synechocystis sp. (strain ATCC 27184 / PCC 6803 / Kazusa).